Consider the following 210-residue polypeptide: Fibroblast growth factor 8 (210 aa).

The first 27 residues, 1 to 27, serve as a signal peptide directing secretion; that stretch reads MRLIPSRLSYLFLHLFAFCYYAQVTIQ.

This sequence belongs to the heparin-binding growth factors family. Monomer. Homodimer.

The protein localises to the secreted. Plays an important role in the regulation of embryonic development, cell proliferation, cell differentiation and cell migration. Required for Kupffer's vesicle ciliogenesis. The sequence is that of Fibroblast growth factor 8 from Danio rerio (Zebrafish).